The sequence spans 62 residues: Translational regulator CsrA (62 aa).

This sequence belongs to the CsrA/RsmA family. In terms of assembly, homodimer; the beta-strands of each monomer intercalate to form a hydrophobic core, while the alpha-helices form wings that extend away from the core.

It is found in the cytoplasm. Its function is as follows. A key translational regulator that binds mRNA to regulate translation initiation and/or mRNA stability. Mediates global changes in gene expression, shifting from rapid growth to stress survival by linking envelope stress, the stringent response and the catabolite repression systems. Usually binds in the 5'-UTR; binding at or near the Shine-Dalgarno sequence prevents ribosome-binding, repressing translation, binding elsewhere in the 5'-UTR can activate translation and/or stabilize the mRNA. Its function is antagonized by small RNA(s). This Haemophilus ducreyi (strain 35000HP / ATCC 700724) protein is Translational regulator CsrA.